Here is a 320-residue protein sequence, read N- to C-terminus: Prophage side tail fiber protein homolog StfQ (320 aa).

Disordered regions lie at residues 147 to 213 (SGRA…HKSS) and 241 to 270 (TTSGSGQTRNAGKTSSDGAHTHSLSGTAAS). 2 stretches are compositionally biased toward polar residues: residues 172 to 206 (DLGTETTSSFDYGTKSTNNTGAHTHSISGTANSAG) and 241 to 258 (TTSGSGQTRNAGKTSSDG). A compositionally biased stretch (low complexity) spans 261–270 (THSLSGTAAS).

Belongs to the tail fiber family.

The protein is Prophage side tail fiber protein homolog StfQ (stfQ) of Escherichia coli (strain K12).